A 226-amino-acid chain; its full sequence is Urease accessory protein UreF (226 aa).

This sequence belongs to the UreF family. As to quaternary structure, ureD, UreF and UreG form a complex that acts as a GTP-hydrolysis-dependent molecular chaperone, activating the urease apoprotein by helping to assemble the nickel containing metallocenter of UreC. The UreE protein probably delivers the nickel.

Its subcellular location is the cytoplasm. In terms of biological role, required for maturation of urease via the functional incorporation of the urease nickel metallocenter. The protein is Urease accessory protein UreF of Corynebacterium glutamicum (strain R).